The primary structure comprises 458 residues: Argininosuccinate lyase (458 aa).

The protein belongs to the lyase 1 family. Argininosuccinate lyase subfamily.

It localises to the cytoplasm. It carries out the reaction 2-(N(omega)-L-arginino)succinate = fumarate + L-arginine. It functions in the pathway amino-acid biosynthesis; L-arginine biosynthesis; L-arginine from L-ornithine and carbamoyl phosphate: step 3/3. The sequence is that of Argininosuccinate lyase from Geobacter metallireducens (strain ATCC 53774 / DSM 7210 / GS-15).